A 235-amino-acid polypeptide reads, in one-letter code: Large ribosomal subunit protein uL1 (235 aa).

It belongs to the universal ribosomal protein uL1 family. In terms of assembly, part of the 50S ribosomal subunit.

Its function is as follows. Binds directly to 23S rRNA. The L1 stalk is quite mobile in the ribosome, and is involved in E site tRNA release. Protein L1 is also a translational repressor protein, it controls the translation of the L11 operon by binding to its mRNA. In Parasynechococcus marenigrum (strain WH8102), this protein is Large ribosomal subunit protein uL1.